A 1387-amino-acid chain; its full sequence is DNA-directed RNA polymerase subunit beta'' (1387 aa).

Zn(2+) contacts are provided by Cys-224, Cys-295, Cys-302, and Cys-305.

This sequence belongs to the RNA polymerase beta' chain family. RpoC2 subfamily. As to quaternary structure, in plastids the minimal PEP RNA polymerase catalytic core is composed of four subunits: alpha, beta, beta', and beta''. When a (nuclear-encoded) sigma factor is associated with the core the holoenzyme is formed, which can initiate transcription. It depends on Zn(2+) as a cofactor.

It localises to the plastid. Its subcellular location is the chloroplast. It carries out the reaction RNA(n) + a ribonucleoside 5'-triphosphate = RNA(n+1) + diphosphate. Its function is as follows. DNA-dependent RNA polymerase catalyzes the transcription of DNA into RNA using the four ribonucleoside triphosphates as substrates. The chain is DNA-directed RNA polymerase subunit beta'' from Panax ginseng (Korean ginseng).